A 212-amino-acid chain; its full sequence is Adenylate kinase (212 aa).

Position 14-19 (14-19 (GSGKGT)) interacts with ATP. Residues 34–63 (STGDLFRKKISEDSQFAAQIQNYLSSGSYV) are NMP. AMP is bound by residues Thr35, Arg40, 61–63 (SYV), 89–92 (GYPR), and Gln96. The tract at residues 126-163 (QRLFCQKCQKSYNLLLAKPKNGLKCDLDNTDLITRNDD) is LID. ATP is bound at residue Arg127. Cys130 and Cys133 together coordinate Zn(2+). 136-137 (SY) lines the ATP pocket. Zn(2+) contacts are provided by Cys150 and Asp153. Residues Arg160 and Arg171 each contribute to the AMP site. Gln199 contacts ATP.

It belongs to the adenylate kinase family. As to quaternary structure, monomer.

It localises to the cytoplasm. The catalysed reaction is AMP + ATP = 2 ADP. The protein operates within purine metabolism; AMP biosynthesis via salvage pathway; AMP from ADP: step 1/1. Functionally, catalyzes the reversible transfer of the terminal phosphate group between ATP and AMP. Plays an important role in cellular energy homeostasis and in adenine nucleotide metabolism. The sequence is that of Adenylate kinase from Mesomycoplasma hyopneumoniae (strain 7448) (Mycoplasma hyopneumoniae).